A 537-amino-acid polypeptide reads, in one-letter code: ATP synthase subunit alpha (537 aa).

174–181 (GDRQTGKT) serves as a coordination point for ATP.

It belongs to the ATPase alpha/beta chains family. F-type ATPases have 2 components, CF(1) - the catalytic core - and CF(0) - the membrane proton channel. CF(1) has five subunits: alpha(3), beta(3), gamma(1), delta(1), epsilon(1). CF(0) has three main subunits: a(1), b(2) and c(9-12). The alpha and beta chains form an alternating ring which encloses part of the gamma chain. CF(1) is attached to CF(0) by a central stalk formed by the gamma and epsilon chains, while a peripheral stalk is formed by the delta and b chains.

The protein resides in the cell inner membrane. The catalysed reaction is ATP + H2O + 4 H(+)(in) = ADP + phosphate + 5 H(+)(out). In terms of biological role, produces ATP from ADP in the presence of a proton gradient across the membrane. The alpha chain is a regulatory subunit. In Verminephrobacter eiseniae (strain EF01-2), this protein is ATP synthase subunit alpha.